The sequence spans 1511 residues: ATP-dependent permease PDR12 (1511 aa).

Positions 1 to 21 (MSSTDEHIEKDISSRSNHDDD) are enriched in basic and acidic residues. Positions 1–37 (MSSTDEHIEKDISSRSNHDDDYANSVQSYAASEGQVD) are disordered. Residue Ser-2 is modified to N-acetylserine. The Cytoplasmic portion of the chain corresponds to 2–508 (SSTDEHIEKD…RGFQRVKGDS (507 aa)). Ser-32, Ser-52, and Ser-56 each carry phosphoserine. Residues 144–397 (IPAHLISKFT…FQRMGWVKPN (254 aa)) form the ABC transporter 1 domain. A Glycyl lysine isopeptide (Lys-Gly) (interchain with G-Cter in ubiquitin) cross-link involves residue Lys-426. The chain crosses the membrane as a helical span at residues 509–529 (TYTKVYLSSFLIKALIIGSMF). Residues 530–548 (HKIDDKSQSTTAGAYSRGG) are Extracellular-facing. Residues 549–569 (MLFYVLLFASVTSLAEIGNSF) form a helical membrane-spanning segment. Topologically, residues 570-597 (SSRPVIVKHKSYSMYHLSAESLQEIITE) are cytoplasmic. Residues 598 to 618 (FPTKFVAIVILCLITYWIPFM) traverse the membrane as a helical segment. Residues 619 to 622 (KYEA) lie on the Extracellular side of the membrane. Residues 623–643 (GAFFQYILYLLTVQQCTSFIF) traverse the membrane as a helical segment. Topologically, residues 644–657 (KFVATMSKSGVDAH) are cytoplasmic. The helical transmembrane segment at 658–678 (AVGGLWVLMLCVYAGFVLPIG) threads the bilayer. The Extracellular portion of the chain corresponds to 679–765 (EMHHWIRWLH…FAYKHAWRNW (87 aa)). Residues 766 to 786 (GVNIVWTFGYIVFNVILSEYL) form a helical membrane-spanning segment. At 787–1182 (KPVEGGGDLL…WRSPVYIRAK (396 aa)) the chain is on the cytoplasmic side. The region spanning 836–1084 (IAEKDVFTWN…TLLKYFERQS (249 aa)) is the ABC transporter 2 domain. Residues 878 to 885 (GESGAGKT) and 972 to 979 (AEALVGKT) contribute to the ATP site. The chain crosses the membrane as a helical span at residues 1183-1203 (FFECVACALFVGLSYVGVNHS). Position 1204 (Val-1204) is a topological domain, extracellular. Residues 1205–1225 (GGAIEAFSSIFMLLLIALAMI) traverse the membrane as a helical segment. The Cytoplasmic segment spans residues 1226–1254 (NQLHVFAYDSRELYEVREAASNTFHWSVL). Residues 1255–1275 (LLCHAAVENFWSTLCQFMCFI) form a helical membrane-spanning segment. Over 1276-1291 (CYYWPAQFSGRASHAG) the chain is Extracellular. A helical transmembrane segment spans residues 1292 to 1312 (FFFFFYVLIFPLYFVTYGLWI). Residues 1313-1318 (LYMSPD) lie on the Cytoplasmic side of the membrane. Residues 1319 to 1339 (VPSASMINSNLFAAMLLFCGI) form a helical membrane-spanning segment. Residues 1340 to 1444 (LQPREKMPAF…NVKWDHRWRN (105 aa)) are Extracellular-facing. An N-linked (GlcNAc...) asparagine glycan is attached at Asn-1405. The chain crosses the membrane as a helical span at residues 1445–1465 (FGFMWAYICFNIAAMLICYYV). At 1466–1511 (VRVKVWSLKSVLNFKKWFNGPRKERHEKDTNIFQTVPGDENKITKK) the chain is on the cytoplasmic side.

It belongs to the ABC transporter superfamily. ABCG family. PDR (TC 3.A.1.205) subfamily.

The protein resides in the cell membrane. Its function is as follows. Plasma membrane transporter which mediates resistance to water-soluble, monocarboxylic acids with chain lengths of from C1 to C7 by active extrusion of the preservative anions from the cytosol. Also involved in the export of aromatic and branched-chain organic acids produced in amino acid catabolism. This chain is ATP-dependent permease PDR12 (PDR12), found in Saccharomyces cerevisiae (strain ATCC 204508 / S288c) (Baker's yeast).